Consider the following 264-residue polypeptide: Small ribosomal subunit protein uS2 (264 aa).

The tract at residues 228 to 264 (HEDVSAGPVEEQSDEAQAAEQGTEGDTAQLTSSQGRS) is disordered. The segment covering 251-264 (EGDTAQLTSSQGRS) has biased composition (polar residues).

It belongs to the universal ribosomal protein uS2 family.

This Deinococcus radiodurans (strain ATCC 13939 / DSM 20539 / JCM 16871 / CCUG 27074 / LMG 4051 / NBRC 15346 / NCIMB 9279 / VKM B-1422 / R1) protein is Small ribosomal subunit protein uS2.